Reading from the N-terminus, the 752-residue chain is Zinc finger protein 184 (752 aa).

Residues 28-99 (VTFKDVIVDF…EPSIPVGTPG (72 aa)) enclose the KRAB domain. Phosphoserine is present on residues Ser117, Ser122, and Ser200. Residue Lys207 forms a Glycyl lysine isopeptide (Lys-Gly) (interchain with G-Cter in SUMO2) linkage. 19 consecutive C2H2-type zinc fingers follow at residues 223–245 (CKCNECGKAFTYCSALIRHQRTH), 251–273 (YKCNECEKAFSRSENLINHQRIH), 279–301 (YKCDQCGKGFIEGPSLTQHQRIH), 307–329 (YKCDECGKAFSQRTHLVQHQRIH), 335–357 (YTCNECGKAFSQRGHFMEHQKIH), 363–385 (FKCDECDKTFTRSTHLTQHQKIH), 391–413 (YKCNECGKAFNGPSTFIRHHMIH), 419–441 (YECNECGKAFSQHSNLTQHQKTH), 447–469 (YDCAECGKSFSYWSSLAQHLKIH), 475–497 (YKCNECGKAFSYCSSLTQHRRIH), 503–525 (FECSECGKAFSYLSNLNQHQKTH), 531–553 (YECKECGKAFIRSSSLAKHERIH), 559–581 (YQCHECGKTFSYGSSLIQHRKIH), 587–609 (YKCNECGRAFNQNIHLTQHKRIH), 615–637 (YECAECGKAFRHCSSLAQHQKTH), 643–665 (YHCNKCEKAFSQSSHLAQHQRIH), 671–693 (YKCNECDKTFSRSTHLTEHQNTH), 699–721 (YNCNECRKTFSQSTYLIQHQRIH), and 727–749 (FGCNDCGKAFRYRSALNKHQRLH).

The protein belongs to the krueppel C2H2-type zinc-finger protein family.

It is found in the nucleus. May be involved in transcriptional regulation. This Bos taurus (Bovine) protein is Zinc finger protein 184 (ZNF184).